A 258-amino-acid chain; its full sequence is Imidazole glycerol phosphate synthase subunit HisF (258 aa).

Catalysis depends on residues D11 and D130.

This sequence belongs to the HisA/HisF family. As to quaternary structure, heterodimer of HisH and HisF.

Its subcellular location is the cytoplasm. It carries out the reaction 5-[(5-phospho-1-deoxy-D-ribulos-1-ylimino)methylamino]-1-(5-phospho-beta-D-ribosyl)imidazole-4-carboxamide + L-glutamine = D-erythro-1-(imidazol-4-yl)glycerol 3-phosphate + 5-amino-1-(5-phospho-beta-D-ribosyl)imidazole-4-carboxamide + L-glutamate + H(+). It functions in the pathway amino-acid biosynthesis; L-histidine biosynthesis; L-histidine from 5-phospho-alpha-D-ribose 1-diphosphate: step 5/9. Its function is as follows. IGPS catalyzes the conversion of PRFAR and glutamine to IGP, AICAR and glutamate. The HisF subunit catalyzes the cyclization activity that produces IGP and AICAR from PRFAR using the ammonia provided by the HisH subunit. This is Imidazole glycerol phosphate synthase subunit HisF from Escherichia coli O6:K15:H31 (strain 536 / UPEC).